A 161-amino-acid chain; its full sequence is MQTIEQQITNIIEESLTDMGFELVLVKFKGVNTKVVEILIDSLNGNKISIEDCTNVSRTISAILDVEDLIEDAYSLEVSSSGIERKLVKFENYNRFLGREVKVKLKALLNGKTLYQGKIIKAENNKIYLKCAEQEVLIDFNLIKNANLVLTEEVFKKLLGS.

This sequence belongs to the RimP family.

The protein localises to the cytoplasm. Functionally, required for maturation of 30S ribosomal subunits. This Rickettsia typhi (strain ATCC VR-144 / Wilmington) protein is Ribosome maturation factor RimP.